The following is a 317-amino-acid chain: Melanocyte-stimulating hormone receptor (317 aa).

The Extracellular segment spans residues 1–37; the sequence is MPVQGSQRRLLGSLNSTPTATPHLGLAANQTGARCLE. Asn29 is a glycosylation site (N-linked (GlcNAc...) asparagine). A helical transmembrane segment spans residues 38-63; the sequence is VSVPDGLFLSLGLVSLVENVLVVTAI. At 64–72 the chain is on the cytoplasmic side; that stretch reads AKNRNLHSP. Residues 73-93 traverse the membrane as a helical segment; it reads MYCFICCLALSDLLVSGSNML. The Extracellular portion of the chain corresponds to 94–118; that stretch reads ETAVTLLLEAGVLAARAAVVQQLDN. The helical transmembrane segment at 119–140 threads the bilayer; the sequence is VIDVITCSSMLSSLCFLGAIAV. Over 141–163 the chain is Cytoplasmic; that stretch reads DRYISIFYALRYHSIVTLPRARR. Residues 164–183 traverse the membrane as a helical segment; the sequence is AVAAIWVASVLFSTLFIAYY. Residues 184-191 lie on the Extracellular side of the membrane; that stretch reads DHAAVLLC. A helical membrane pass occupies residues 192–211; the sequence is LVIFFLAMLVLMAVLYVHML. The Cytoplasmic segment spans residues 212–240; that stretch reads ARACQHAQGIARLHKRQRLAHQGFGLKGA. Residues 241–266 traverse the membrane as a helical segment; it reads ATLTILLGIFFLCWGPFFLHLTLIVL. At 267 to 279 the chain is on the extracellular side; sequence CPQHPTCSCIFKN. The helical transmembrane segment at 280 to 300 threads the bilayer; it reads FNLFLALIICNAIIDPLIYAF. At 301–317 the chain is on the cytoplasmic side; sequence RSQELRRTLKEVLLCSW. A lipid anchor (S-palmitoyl cysteine) is attached at Cys315.

Belongs to the G-protein coupled receptor 1 family. As to quaternary structure, interacts with MGRN1, but does not undergo MGRN1-mediated ubiquitination; this interaction competes with GNAS-binding and thus inhibits agonist-induced cAMP production. Interacts with OPN3; the interaction results in a decrease in MC1R-mediated cAMP signaling and ultimately a decrease in melanin production in melanocytes.

Its subcellular location is the cell membrane. In terms of biological role, receptor for MSH (alpha, beta and gamma) and ACTH. The activity of this receptor is mediated by G proteins which activate adenylate cyclase. Mediates melanogenesis, the production of eumelanin (black/brown) and phaeomelanin (red/yellow), via regulation of cAMP signaling in melanocytes. The chain is Melanocyte-stimulating hormone receptor (MC1R) from Papio anubis (Olive baboon).